The following is a 914-amino-acid chain: Coatomer subunit beta' (914 aa).

WD repeat units lie at residues 13-54 (SRSD…KDFE), 55-94 (VCDV…KVHS), 97-136 (AHSD…ACQR), 140-180 (GHTH…ANFT), 183-224 (GHEK…CVQT), 227-266 (GHAQ…LETC), and 352-390 (ACEI…NKAF).

This sequence belongs to the WD repeat COPB2 family. As to quaternary structure, oligomeric complex that consists of at least the alpha, beta, beta', gamma, delta, epsilon and zeta subunits.

The protein resides in the cytoplasm. Its subcellular location is the golgi apparatus membrane. The protein localises to the cytoplasmic vesicle. It is found in the COPI-coated vesicle membrane. The coatomer is a cytosolic protein complex that binds to dilysine motifs and reversibly associates with Golgi non-clathrin-coated vesicles, which further mediate biosynthetic protein transport from the ER, via the Golgi up to the trans Golgi network. Coatomer complex is required for budding from Golgi membranes, and is essential for the retrograde Golgi-to-ER transport of dilysine-tagged proteins. The protein is Coatomer subunit beta' of Drosophila melanogaster (Fruit fly).